A 267-amino-acid chain; its full sequence is LexA repressor (267 aa).

The tract at residues 1-44 (MSIDESSDNPTPRPKLGRPPKSEADKRAEKEAQKDGKKPALSTR) is disordered. The segment covering 20–38 (PKSEADKRAEKEAQKDGKK) has biased composition (basic and acidic residues). The H-T-H motif DNA-binding region spans 65 to 85 (IREIADAVGLHSTSSVSYHLT). Residues 111-140 (GQLTNESTKKNAGSPQPTSAAIPEPTTEGE) form a disordered region. Positions 112 to 129 (QLTNESTKKNAGSPQPTS) are enriched in polar residues. Residues S191 and K228 each act as for autocatalytic cleavage activity in the active site.

It belongs to the peptidase S24 family. In terms of assembly, homodimer.

The enzyme catalyses Hydrolysis of Ala-|-Gly bond in repressor LexA.. In terms of biological role, represses a number of genes involved in the response to DNA damage (SOS response), including recA and lexA. In the presence of single-stranded DNA, RecA interacts with LexA causing an autocatalytic cleavage which disrupts the DNA-binding part of LexA, leading to derepression of the SOS regulon and eventually DNA repair. The chain is LexA repressor from Corynebacterium jeikeium (strain K411).